We begin with the raw amino-acid sequence, 426 residues long: Probable indole-3-pyruvate monooxygenase YUCCA8 (426 aa).

An FAD-binding site is contributed by 29–34 (GAGPSG). Residue 199–204 (GCGNSG) coordinates NADP(+).

It belongs to the FMO family. It depends on FAD as a cofactor. As to expression, expressed in root tips and in hydathodes. Expressed in root vasculature and quiescent center, but not in the meristematic zone of the root tip.

It carries out the reaction indole-3-pyruvate + NADPH + O2 + H(+) = (indol-3-yl)acetate + CO2 + NADP(+) + H2O. The protein operates within plant hormone metabolism; auxin biosynthesis. In terms of biological role, involved in auxin biosynthesis. Belongs to the set of redundant YUCCA genes probably responsible for auxin biosynthesis in roots. The sequence is that of Probable indole-3-pyruvate monooxygenase YUCCA8 (YUC8) from Arabidopsis thaliana (Mouse-ear cress).